Reading from the N-terminus, the 587-residue chain is Barrierpepsin (587 aa).

An N-terminal signal peptide occupies residues 1–24 (MSAINHLCLKLILASFAIINTITA). The region spanning 45 to 393 (YATTLDIGTP…DLDNYKISLA (349 aa)) is the Peptidase A1 domain. D63 is a catalytic residue. 3 N-linked (GlcNAc...) asparagine glycosylation sites follow: N84, N90, and N268. D287 is a catalytic residue. N308 carries N-linked (GlcNAc...) asparagine glycosylation. C322 and C358 are disulfide-bonded. N-linked (GlcNAc...) asparagine glycans are attached at residues N366, N398, N468, N503, and N551. The interval 466 to 505 (SRNCSTKMPGTRSTTVLSKPTQNSAMHQSTGAVTQTSNET) is disordered.

Belongs to the peptidase A1 family.

It is found in the secreted. It carries out the reaction Selective cleavage of 6-Leu-|-Lys-7 bond in the pheromone alpha-mating factor.. In terms of biological role, this protein called 'barrier activity' is excreted by yeast cells mating type a. It is probably a protease that cleaves alpha-factor and thus acts as an antagonist of this mating pheromone and establishes optimal pheromone concentration for conjugation. The protein is Barrierpepsin (BAR1) of Saccharomyces cerevisiae (strain ATCC 204508 / S288c) (Baker's yeast).